Reading from the N-terminus, the 218-residue chain is N-(5'-phosphoribosyl)anthranilate isomerase (218 aa).

The protein belongs to the TrpF family.

The enzyme catalyses N-(5-phospho-beta-D-ribosyl)anthranilate = 1-(2-carboxyphenylamino)-1-deoxy-D-ribulose 5-phosphate. It functions in the pathway amino-acid biosynthesis; L-tryptophan biosynthesis; L-tryptophan from chorismate: step 3/5. The sequence is that of N-(5'-phosphoribosyl)anthranilate isomerase from Stenotrophomonas maltophilia (strain R551-3).